The primary structure comprises 349 residues: MKLSDFDFDLPDDLIATRPAQPRSSARLLVARGDAISDAVVRDLPDWLRPGDRLVLNDTRVIPARLSGTRQRQSAQGPVTARIEITLLEPRADGSWSALAKPLRKLREGETIIFSNDLSADVEAIEDGQALLRFNLTGPDFDAALAQAGAMPLPPYIAAKRAADEQDKTDYQTVWARHSGAVAAPTASLHFDDTLLAALAAHGVTFTHVTLHVGAGTFLPVKVEDVTTHKMHAEWGRVSAEAAAEIAATKAAGGRVIPVGTTALRLIESAARGGQIAPWEGDTDIFIYPGFDFRVADGLMTNFHLPKSTLLMLVSALMGQESIRKIYAHAVENRYRFFSYGDASLLLPG.

It belongs to the QueA family. In terms of assembly, monomer.

It is found in the cytoplasm. The enzyme catalyses 7-aminomethyl-7-carbaguanosine(34) in tRNA + S-adenosyl-L-methionine = epoxyqueuosine(34) in tRNA + adenine + L-methionine + 2 H(+). It functions in the pathway tRNA modification; tRNA-queuosine biosynthesis. In terms of biological role, transfers and isomerizes the ribose moiety from AdoMet to the 7-aminomethyl group of 7-deazaguanine (preQ1-tRNA) to give epoxyqueuosine (oQ-tRNA). The sequence is that of S-adenosylmethionine:tRNA ribosyltransferase-isomerase from Ruegeria pomeroyi (strain ATCC 700808 / DSM 15171 / DSS-3) (Silicibacter pomeroyi).